The chain runs to 141 residues: Protein wingless (141 aa).

A lipid anchor (O-palmitoleoyl serine; by PORCN) is attached at S3. A compositionally biased stretch (polar residues) spans 40–49 (TDLEAPTQRN). Positions 40 to 61 (TDLEAPTQRNDAAPHRAPRRER) are disordered. C107 and C122 are joined by a disulfide. 2 N-linked (GlcNAc...) asparagine glycosylation sites follow: N108 and N138.

The protein belongs to the Wnt family. Palmitoleoylated by porcupine. The lipid group functions as a sorting signal, targeting the ligand to polarized vesicles that transport wg to unique sites at the cell surface. Depalmitoleoylated by notum, leading to inhibit Wnt signaling pathway.

The protein localises to the secreted. It is found in the extracellular space. The protein resides in the extracellular matrix. In terms of biological role, segment polarity protein. Binds to the frizzled seven-transmembrane receptors. This protein is probably a growth factor. This is Protein wingless (WG) from Manduca sexta (Tobacco hawkmoth).